Consider the following 222-residue polypeptide: Peptide methionine sulfoxide reductase MsrA (222 aa).

Residue cysteine 60 is part of the active site.

This sequence belongs to the MsrA Met sulfoxide reductase family.

The catalysed reaction is L-methionyl-[protein] + [thioredoxin]-disulfide + H2O = L-methionyl-(S)-S-oxide-[protein] + [thioredoxin]-dithiol. The enzyme catalyses [thioredoxin]-disulfide + L-methionine + H2O = L-methionine (S)-S-oxide + [thioredoxin]-dithiol. Its function is as follows. Has an important function as a repair enzyme for proteins that have been inactivated by oxidation. Catalyzes the reversible oxidation-reduction of methionine sulfoxide in proteins to methionine. The chain is Peptide methionine sulfoxide reductase MsrA from Pseudomonas putida (strain ATCC 47054 / DSM 6125 / CFBP 8728 / NCIMB 11950 / KT2440).